The sequence spans 548 residues: Glucose-6-phosphate isomerase (548 aa).

Glu359 functions as the Proton donor in the catalytic mechanism. Active-site residues include His390 and Lys510.

This sequence belongs to the GPI family.

Its subcellular location is the cytoplasm. It catalyses the reaction alpha-D-glucose 6-phosphate = beta-D-fructose 6-phosphate. It functions in the pathway carbohydrate biosynthesis; gluconeogenesis. Its pathway is carbohydrate degradation; glycolysis; D-glyceraldehyde 3-phosphate and glycerone phosphate from D-glucose: step 2/4. Its function is as follows. Catalyzes the reversible isomerization of glucose-6-phosphate to fructose-6-phosphate. This is Glucose-6-phosphate isomerase from Gloeobacter violaceus (strain ATCC 29082 / PCC 7421).